Consider the following 514-residue polypeptide: uncharacterized protein (514 aa).

This sequence to E.coli YjjI.

This is an uncharacterized protein from Haemophilus influenzae (strain ATCC 51907 / DSM 11121 / KW20 / Rd).